Reading from the N-terminus, the 200-residue chain is Large ribosomal subunit protein uL4 (200 aa).

A disordered region spans residues 38–75; the sequence is GRQGSKQQKNRSDVSGGGKRPWRQKGTGRARAGTSRGP.

It belongs to the universal ribosomal protein uL4 family. Part of the 50S ribosomal subunit.

One of the primary rRNA binding proteins, this protein initially binds near the 5'-end of the 23S rRNA. It is important during the early stages of 50S assembly. It makes multiple contacts with different domains of the 23S rRNA in the assembled 50S subunit and ribosome. In terms of biological role, forms part of the polypeptide exit tunnel. The sequence is that of Large ribosomal subunit protein uL4 from Azotobacter vinelandii (strain DJ / ATCC BAA-1303).